A 327-amino-acid chain; its full sequence is Putative HTH-type transcriptional regulatory protein MmarC6_0210 (327 aa).

Residues 128 to 183 (LRETREKLKISVGELAEISRVSRKTIYKYEQNEANPSAEVAIKIEEYLDVPLIKGI) enclose the HTH cro/C1-type domain. Residues 139-158 (VGELAEISRVSRKTIYKYEQ) constitute a DNA-binding region (H-T-H motif).

This Methanococcus maripaludis (strain C6 / ATCC BAA-1332) protein is Putative HTH-type transcriptional regulatory protein MmarC6_0210.